A 387-amino-acid chain; its full sequence is Peroxisomal membrane protein LPX1 (387 aa).

The segment at Gln-385–Leu-387 is peroxisomal targeting signal type 1.

The protein resides in the peroxisome matrix. In terms of biological role, has acyl esterase, lipase and phospholipase A activity. This is Peroxisomal membrane protein LPX1 (LPX1) from Saccharomyces cerevisiae (strain ATCC 204508 / S288c) (Baker's yeast).